The chain runs to 94 residues: Putative pterin-4-alpha-carbinolamine dehydratase (94 aa).

The protein belongs to the pterin-4-alpha-carbinolamine dehydratase family.

It catalyses the reaction (4aS,6R)-4a-hydroxy-L-erythro-5,6,7,8-tetrahydrobiopterin = (6R)-L-erythro-6,7-dihydrobiopterin + H2O. In Mycolicibacterium smegmatis (strain ATCC 700084 / mc(2)155) (Mycobacterium smegmatis), this protein is Putative pterin-4-alpha-carbinolamine dehydratase.